A 302-amino-acid chain; its full sequence is Phospho-N-acetylmuramoyl-pentapeptide-transferase (302 aa).

Helical transmembrane passes span 1–21 (MIAA…KLFR), 42–62 (GTPT…GMIS), 68–88 (VLLG…LSVV), 123–143 (FFGF…LVIV), 154–174 (GLDG…WFFL), 178–198 (GVSE…LVFN), 204–224 (IFMG…VSVL), 229–249 (FYLV…ILQV), and 279–299 (IVAV…EIFG).

This sequence belongs to the glycosyltransferase 4 family. MraY subfamily. Mg(2+) is required as a cofactor.

It is found in the cell inner membrane. It carries out the reaction UDP-N-acetyl-alpha-D-muramoyl-L-alanyl-gamma-D-glutamyl-meso-2,6-diaminopimeloyl-D-alanyl-D-alanine + di-trans,octa-cis-undecaprenyl phosphate = di-trans,octa-cis-undecaprenyl diphospho-N-acetyl-alpha-D-muramoyl-L-alanyl-D-glutamyl-meso-2,6-diaminopimeloyl-D-alanyl-D-alanine + UMP. Its pathway is cell wall biogenesis; peptidoglycan biosynthesis. Its function is as follows. Catalyzes the initial step of the lipid cycle reactions in the biosynthesis of the cell wall peptidoglycan: transfers peptidoglycan precursor phospho-MurNAc-pentapeptide from UDP-MurNAc-pentapeptide onto the lipid carrier undecaprenyl phosphate, yielding undecaprenyl-pyrophosphoryl-MurNAc-pentapeptide, known as lipid I. This is Phospho-N-acetylmuramoyl-pentapeptide-transferase from Thermotoga petrophila (strain ATCC BAA-488 / DSM 13995 / JCM 10881 / RKU-1).